A 277-amino-acid chain; its full sequence is Putative phosphoenolpyruvate synthase regulatory protein (277 aa).

157–164 (GVSRCGKT) serves as a coordination point for ADP.

Belongs to the pyruvate, phosphate/water dikinase regulatory protein family. PSRP subfamily.

It catalyses the reaction [pyruvate, water dikinase] + ADP = [pyruvate, water dikinase]-phosphate + AMP + H(+). The enzyme catalyses [pyruvate, water dikinase]-phosphate + phosphate + H(+) = [pyruvate, water dikinase] + diphosphate. Functionally, bifunctional serine/threonine kinase and phosphorylase involved in the regulation of the phosphoenolpyruvate synthase (PEPS) by catalyzing its phosphorylation/dephosphorylation. In Cronobacter sakazakii (strain ATCC BAA-894) (Enterobacter sakazakii), this protein is Putative phosphoenolpyruvate synthase regulatory protein.